The primary structure comprises 254 residues: Phosphoribosylaminoimidazole-succinocarboxamide synthase (254 aa).

Belongs to the SAICAR synthetase family.

It carries out the reaction 5-amino-1-(5-phospho-D-ribosyl)imidazole-4-carboxylate + L-aspartate + ATP = (2S)-2-[5-amino-1-(5-phospho-beta-D-ribosyl)imidazole-4-carboxamido]succinate + ADP + phosphate + 2 H(+). It functions in the pathway purine metabolism; IMP biosynthesis via de novo pathway; 5-amino-1-(5-phospho-D-ribosyl)imidazole-4-carboxamide from 5-amino-1-(5-phospho-D-ribosyl)imidazole-4-carboxylate: step 1/2. In Sinorhizobium medicae (strain WSM419) (Ensifer medicae), this protein is Phosphoribosylaminoimidazole-succinocarboxamide synthase.